Reading from the N-terminus, the 702-residue chain is A-type inclusion protein A25 homolog (702 aa).

The segment at 342-380 is disordered; the sequence is TNTGIEEPHATGGDKEDQPIKVVHPPNNDKDDAIKSYNP. Residues 347 to 360 show a composition bias toward basic and acidic residues; sequence EEPHATGGDKEDQP. Coiled coils occupy residues 420-522 and 548-692; these read NGGE…RDGK and EIDK…NNKT.

This sequence belongs to the poxviridae A25 protein family. In terms of assembly, interacts (via N-terminus) with protein A26.

The protein localises to the virion. Functionally, structural protein that forms a matrix surrounding the mature virion (MV) through interaction with protein A26. Presence of protein A25 in the virion structurally prevents direct virus-cell fusion mechanism. The sequence is that of A-type inclusion protein A25 homolog from Variola virus (isolate Human/India/Ind3/1967) (VARV).